We begin with the raw amino-acid sequence, 186 residues long: ATP synthase subunit delta, cyanelle (186 aa).

The protein belongs to the ATPase delta chain family. F-type ATPases have 2 components, F(1) - the catalytic core - and F(0) - the membrane proton channel. F(1) has five subunits: alpha(3), beta(3), gamma(1), delta(1), epsilon(1). CF(0) has four main subunits: a(1), b(1), b'(1) and c(10-14). The alpha and beta chains form an alternating ring which encloses part of the gamma chain. F(1) is attached to F(0) by a central stalk formed by the gamma and epsilon chains, while a peripheral stalk is formed by the delta, b and b' chains.

It localises to the plastid. The protein resides in the cyanelle thylakoid membrane. Its function is as follows. F(1)F(0) ATP synthase produces ATP from ADP in the presence of a proton or sodium gradient. F-type ATPases consist of two structural domains, F(1) containing the extramembraneous catalytic core and F(0) containing the membrane proton channel, linked together by a central stalk and a peripheral stalk. During catalysis, ATP synthesis in the catalytic domain of F(1) is coupled via a rotary mechanism of the central stalk subunits to proton translocation. Functionally, this protein is part of the stalk that links CF(0) to CF(1). It either transmits conformational changes from CF(0) to CF(1) or is implicated in proton conduction. This chain is ATP synthase subunit delta, cyanelle, found in Cyanophora paradoxa.